A 187-amino-acid chain; its full sequence is uncharacterized protein (187 aa).

The region spanning 53 to 187 is the Tyr recombinase domain; the sequence is RKPHIYSPAD…CLQTSYVVPG (135 aa). Residues Arg-98 and Lys-123 contribute to the active site.

Belongs to the 'phage' integrase family.

This is an uncharacterized protein from Sinorhizobium fredii (strain NBRC 101917 / NGR234).